Here is a 152-residue protein sequence, read N- to C-terminus: Ribosomal RNA large subunit methyltransferase H (152 aa).

Residues L68, G100, and 119–124 (FGRMTW) each bind S-adenosyl-L-methionine.

It belongs to the RNA methyltransferase RlmH family. As to quaternary structure, homodimer.

It is found in the cytoplasm. It carries out the reaction pseudouridine(1915) in 23S rRNA + S-adenosyl-L-methionine = N(3)-methylpseudouridine(1915) in 23S rRNA + S-adenosyl-L-homocysteine + H(+). In terms of biological role, specifically methylates the pseudouridine at position 1915 (m3Psi1915) in 23S rRNA. The polypeptide is Ribosomal RNA large subunit methyltransferase H (Paramagnetospirillum magneticum (strain ATCC 700264 / AMB-1) (Magnetospirillum magneticum)).